The following is a 299-amino-acid chain: NAD kinase (299 aa).

The active-site Proton acceptor is Asp-75. Residues 75–76, 149–150, Arg-177, Asp-179, 190–195, Ala-214, and Gln-248 contribute to the NAD(+) site; these read DG, ND, and TAYALS.

This sequence belongs to the NAD kinase family. Requires a divalent metal cation as cofactor.

It localises to the cytoplasm. The catalysed reaction is NAD(+) + ATP = ADP + NADP(+) + H(+). Functionally, involved in the regulation of the intracellular balance of NAD and NADP, and is a key enzyme in the biosynthesis of NADP. Catalyzes specifically the phosphorylation on 2'-hydroxyl of the adenosine moiety of NAD to yield NADP. This chain is NAD kinase, found in Burkholderia thailandensis (strain ATCC 700388 / DSM 13276 / CCUG 48851 / CIP 106301 / E264).